We begin with the raw amino-acid sequence, 390 residues long: F-box/kelch-repeat protein At3g06570 (390 aa).

An F-box domain is found at 23–69; sequence SASFQSLPDDLILSIVARVPRLYHRTVSLVCKSFRSLLVSPELYKAR. Kelch repeat units follow at residues 140–183, 185–234, and 236–281; these read DIYN…VLDR, IFVV…CRTA, and IDGK…QIHN.

This chain is F-box/kelch-repeat protein At3g06570, found in Arabidopsis thaliana (Mouse-ear cress).